Here is a 794-residue protein sequence, read N- to C-terminus: uncharacterized protein (794 aa).

Positions 1 to 22 are cleaved as a signal peptide; it reads MKLKYGTIIFSGLLGVSAILAA. C23 carries the N-palmitoyl cysteine lipid modification. Residue C23 is the site of S-diacylglycerol cysteine attachment. Positions 177-196 are enriched in polar residues; sequence SSGKTQVSQTSSGSNQQKTL. Disordered regions lie at residues 177 to 208, 220 to 257, and 466 to 506; these read SSGKTQVSQTSSGSNQQKTLQKPLKIDTSDSS, AKNNGKKANNSKSNRRSTDQSTQTHNDQGDASESDKKI, and KSTD…ENNS. Residues 220–231 are compositionally biased toward low complexity; it reads AKNNGKKANNSK. Polar residues predominate over residues 238–250; that stretch reads DQSTQTHNDQGDA.

Belongs to the MG185/MG260 family.

It is found in the cell membrane. This is an uncharacterized protein from Mycoplasma pneumoniae (strain ATCC 29342 / M129 / Subtype 1) (Mycoplasmoides pneumoniae).